Here is a 27-residue protein sequence, read N- to C-terminus: M-ectatotoxin-Eb2a (27 aa).

In terms of tissue distribution, expressed by the venom gland.

It is found in the secreted. Antimicrobial peptide forming an alpha-helix in watery and membraneous environments, enabling it to perforate membranes. Active against Gram-negative bacteria E.coli DH5alpha (MIC=5 uM), E.coli MH1 (MIC=0.6 uM) and P.aeruginosa PAO1 (MIC=10 uM) and against Gram-positive bacteria B.subtilis VKM B-501 (MIC=0.6 uM) and A.globiformis VKM Ac-1112 (MIC=0.2 uM). Has cytolytic and hemolytic activity. The protein is M-ectatotoxin-Eb2a of Ectatomma brunneum (Ant).